A 1998-amino-acid chain; its full sequence is MLRHGALTALWITLSVVQTGVAEQVKCNFTLLESRVSSLSASIQWRTFASPCNFSLIYSSDTSGPMWCHPIRIDNFTYGCNPKDLQAGTVYNFRIVSLDGEESTLVLQTDPLPPARFEVNREKTASTTLQVRWTPSSGKVSWYEVQLFDHNNQKIQEVQVQESTTWSQYTFLNLTEGNSYKVAITAVSGEKRSFPVYINGSTVPSPVKDLGISPNPNSLLISWSRGSGNVEQYRLVLMDKGAIVQDTNVDRRDTSYAFHELTPGHLYNLTIVTMASGLQNSRWKLVRTAPMEVSNLKVTNDGRLTSLNVKWQKPPGDVDSYSITLSHQGTIKESKTLAPPVTETQFKDLVPGRLYQVTISCISGELSAEKSAAGRTVPEKVRNLVSYNEIWMKSFTVNWTPPAGDWEHYRIVLFNESLVLLNTTVGKEETHYALDGLELIPGRQYEIEVIVESGNLRNSERCQGRTVPLAVLQLRVKHANETSLGITWRAPLGEWEKYIISLMDRELLVIHKSLSKDAKEFTFTDLMPGRNYKATVTSMSGDLKQSSSIKGRTVPAQVTDLHVNNQGMTSSLFTNWTKALGDVEFYQVLLIHENVVVKNESVSSDTSRYSFRALKPGSLYSVVVTTVSGGISSRQVVAEGRTVPSSVSGVTVNNSGRNDYLSVSWLPAPGEVDHYVVSLSHEGKVDQFLIIAKSVSECSFSSLTPGRLYNVTVTTKSGNYASHSFTEERTVPDKVQGISVSNSARSDYLKVSWVHATGDFDHYEVTIKNRESFIQTKTIPKSENECEFIELVPGRLYSVTVSTKSGQYEASEQGTGRTIPEPVKDLTLLNRSTEDLHVTWSRANGDVDQYEVQLLFNDMKVFPHIHLVNTATEYKFTALTPGRHYKILVLTISGDVQQSAFIEGLTVPSTVKNIHISANGATDRLMVTWSPGGGDVDSYVVSAFRQDEKVDSQTIPKHASEHTFHRLEAGAKYRIAIVSVSGSLRNQIDALGQTVPASVQGVVAANAYSSNSLTVSWQKALGVAERYDILLLNENGLLLSNVSEPATARQHKFEDLTPGKKYKMQILTVSGGLFSKESQAEGRTVPAAVTNLRITENSSRYLSFGWTASEGELSWYNIFLYNPDRTLQERAQVDPLVQSFSFQNLLQGRMYKMVIVTHSGELSNESFIFGRTVPAAVNHLKGSHRNTTDSLWFSWSPASGDFDFYELILYNPNGTKKENWKEKDVTEWRFQGLVPGRKYTLYVVTHSGDLSNKVTGEGRTAPSPPSLLSFADVANTSLAITWKGPPDWTDYNDFELQWFPGDALTIFNPYSSRKSEGRIVYGLHPGRSYQFSVKTVSGDSWKTYSKPISGSVRTKPDKIQNLHCRPQNSTAIACSWIPPDSDFDGYSIECRKMDTQEIEFSRKLEKEKSLLNIMMLVPHKRYLVSIKVQSAGMTSEVVEDSTITMIDRPPQPPPHIRVNEKDVLISKSSINFTVNCSWFSDTNGAVKYFAVVVREADSMDELKPEQQHPLPSYLEYRHNASIRVYQTNYFASKCAESPDSSSKSFNIKLGAEMDSLGGKCDPSQQKFCDGPLKPHTAYRISIRAFTQLFDEDLKEFTKPLYSDTFFSMPITTESEPLFGVIEGVSAGLFLIGMLVALVAFFICRQKASHSRERPSARLSIRRDRPLSVHLNLGQKGNRKTSCPIKINQFEGHFMKLQADSNYLLSKEYEDLKDVGRSQSCDIALLPENRGKNRYNNILPYDASRVKLCNVDDDPCSDYINASYIPGNNFRREYIATQGPLPGTKDDFWKMAWEQNVHNIVMVTQCVEKGRVKCDHYWPADQDPLYYGDLILQMVSESVLPEWTIREFKICSEEQLDAHRLIRHFHYTVWPDHGVPETTQSLIQFVRTVRDYINRSPGAGPTVVHCSAGVGRTGTFVALDRILQQLDSKDSVDIYGAVHDLRLHRVHMVQTECQYVYLHQCVRDVLRAKKLRNEQENPLFPIYENVNPEYHRDAIYSRH.

Positions 1-22 are cleaved as a signal peptide; the sequence is MLRHGALTALWITLSVVQTGVA. Fibronectin type-III domains are found at residues 23–109, 113–206, 207–291, 292–384, 378–466, 470–556, 557–642, 643–733, 734–821, 822–913, 908–994, 995–1088, 1086–1173, 1176–1263, 1264–1357, 1358–1449, and 1449–1551; these read EQVK…VLQT, PPAR…VPSP, VKDL…TAPM, EVSN…VRNL, PEKV…QGRT, AVLQ…TVPA, QVTD…EGRT, VPSS…TVPD, KVQG…TIPE, PVKD…TVKN, PSTV…LGQT, VPAS…VPAA, PAAV…GRTV, AVNH…TAPS, PPSL…TKPD, KIQN…IDRP, and PPQP…KLGA. Topologically, residues 23 to 1622 are extracellular; it reads EQVKCNFTLL…ESEPLFGVIE (1600 aa). Asparagine 28, asparagine 53, asparagine 75, asparagine 173, asparagine 199, and asparagine 268 each carry an N-linked (GlcNAc...) asparagine glycan. N-linked (GlcNAc...) asparagine glycosylation is found at asparagine 415, asparagine 422, asparagine 480, asparagine 575, asparagine 599, and asparagine 653. The N-linked (GlcNAc...) asparagine glycan is linked to asparagine 830. Asparagine 1041, asparagine 1097, asparagine 1164, asparagine 1186, asparagine 1213, asparagine 1275, asparagine 1368, asparagine 1471, asparagine 1475, and asparagine 1519 each carry an N-linked (GlcNAc...) asparagine glycan. A helical transmembrane segment spans residues 1623–1643; that stretch reads GVSAGLFLIGMLVALVAFFIC. Over 1644–1997 the chain is Cytoplasmic; sequence RQKASHSRER…EYHRDAIYSR (354 aa). The 261-residue stretch at 1704–1964 folds into the Tyrosine-protein phosphatase domain; sequence LSKEYEDLKD…VYLHQCVRDV (261 aa). Substrate is bound by residues aspartate 1871, 1905 to 1911, and glutamine 1949; that span reads CSAGVGR. Cysteine 1905 (phosphocysteine intermediate) is an active-site residue. Tyrosine 1982 carries the phosphotyrosine modification.

Belongs to the protein-tyrosine phosphatase family. Receptor class 3 subfamily. Monomer. Interacts with TEK. Interacts via fibronectin type-III 17 domain with CDH5. Detected in a complex with CNTN1 and NRCAM. Interacts (phosphorylated form) with FYN and GRB2. Interacts with IGFBP2. Expression is very high in the vasculature of lung, spleen, and kidney, as well as in the heart valves, and is also present in the endothelium of arterioles and venules. Also expressed in tumor vasculature.

The protein resides in the membrane. It carries out the reaction O-phospho-L-tyrosyl-[protein] + H2O = L-tyrosyl-[protein] + phosphate. In terms of biological role, plays an important role in blood vessel remodeling and angiogenesis. Not necessary for the initial formation of blood vessels, but is essential for their maintenance and remodeling. Can induce dephosphorylation of TEK/TIE2, CDH5/VE-cadherin and KDR/VEGFR-2. Regulates angiopoietin-TIE2 signaling in endothelial cells. Acts as a negative regulator of TIE2, and controls TIE2 driven endothelial cell proliferation, which in turn affects blood vessel remodeling during embryonic development and determines blood vessel size during perinatal growth. Essential for the maintenance of endothelial cell contact integrity and for the adhesive function of VE-cadherin in endothelial cells and this requires the presence of plakoglobin. The polypeptide is Receptor-type tyrosine-protein phosphatase beta (Ptprb) (Mus musculus (Mouse)).